An 89-amino-acid chain; its full sequence is Small ribosomal subunit protein uS17 (89 aa).

It belongs to the universal ribosomal protein uS17 family. Part of the 30S ribosomal subunit.

Functionally, one of the primary rRNA binding proteins, it binds specifically to the 5'-end of 16S ribosomal RNA. The polypeptide is Small ribosomal subunit protein uS17 (Ralstonia pickettii (strain 12J)).